The following is a 445-amino-acid chain: Chromosome partition protein MukF (445 aa).

The leucine-zipper stretch occupies residues Leu-213 to Ile-241.

Belongs to the MukF family. As to quaternary structure, interacts, and probably forms a ternary complex, with MukE and MukB via its C-terminal region. The complex formation is stimulated by calcium or magnesium. It is required for an interaction between MukE and MukB.

It is found in the cytoplasm. It localises to the nucleoid. In terms of biological role, involved in chromosome condensation, segregation and cell cycle progression. May participate in facilitating chromosome segregation by condensation DNA from both sides of a centrally located replisome during cell division. Not required for mini-F plasmid partitioning. Probably acts via its interaction with MukB and MukE. Overexpression results in anucleate cells. It has a calcium binding activity. This is Chromosome partition protein MukF from Vibrio vulnificus (strain YJ016).